We begin with the raw amino-acid sequence, 1128 residues long: Glutamate receptor-interacting protein 1 (1128 aa).

Residue Ser-43 is modified to Phosphoserine. 6 consecutive PDZ domains span residues 53–136, 150–238, 252–336, 472–561, 573–658, and 673–755; these read VVEL…EYEL, TVEV…EYDV, LVEV…LPHH, EVVL…EFDV, HVKL…RKDE, and TVEL…KKQT. Disordered regions lie at residues 754 to 798 and 935 to 981; these read QTDA…YPST and MSLN…GRKS. Positions 944–974 are enriched in polar residues; it reads PRSQLGRQASFQERSSSRPHYSQTTRSNTLP. Positions 1004-1086 constitute a PDZ 7 domain; sequence KVTLYKDSDM…KLDLVISRNP (83 aa). Positions 1093 to 1115 are enriched in polar residues; the sequence is IDQQSLPGDWSEQNSAFFQQPSH. The tract at residues 1093 to 1128 is disordered; sequence IDQQSLPGDWSEQNSAFFQQPSHGGNLETREPTNTL.

As to quaternary structure, interacts with EPHA7, EPHB2, KIF5A, KIF5B, KIF5C, GRIA2, GRIA3, GRIPAP1/GRASP1, PPFIA1, PPFIA4, FRAS1, PLCD4, PTPRF and liprins-alpha. Can form homomultimers or heteromultimers with GRIP2. Forms a ternary complex with GRIA2 and CSPG4. Interacts with ATAD1 in an ATP-dependent manner. ATAD1-catalyzed ATP hydrolysis disrupts binding to ATAD1 and to GRIA2 and leads to AMPAR complex disassembly. Interacts with EFNB1, EFNB3 and the C-terminal tail of PRLHR. Interacts with SLC30A9. Interacts with BUD23. Forms a complex with NSG1, GRIA2 and STX12; controls the intracellular fate of AMPAR and the endosomal sorting of the GRIA2 subunit toward recycling and membrane targeting. Interacts with NSG1.

The protein localises to the cytoplasmic vesicle. It localises to the perikaryon. The protein resides in the cell projection. Its subcellular location is the dendrite. It is found in the cytoplasm. The protein localises to the endomembrane system. It localises to the postsynaptic cell membrane. The protein resides in the postsynaptic density. Its subcellular location is the endoplasmic reticulum membrane. Functionally, may play a role as a localized scaffold for the assembly of a multiprotein signaling complex and as mediator of the trafficking of its binding partners at specific subcellular location in neurons. Through complex formation with NSG1, GRIA2 and STX12 controls the intracellular fate of AMPAR and the endosomal sorting of the GRIA2 subunit toward recycling and membrane targeting. The chain is Glutamate receptor-interacting protein 1 (GRIP1) from Homo sapiens (Human).